We begin with the raw amino-acid sequence, 258 residues long: UBX domain-containing protein 2A (258 aa).

Residues 1–14 are compositionally biased toward basic and acidic residues; the sequence is MKEVDNLDSIKEEW. Positions 1–30 are disordered; sequence MKEVDNLDSIKEEWACETGPPDSQPLNDNQ. The tract at residues 1–152 is required for interaction with CHRNA3; that stretch reads MKEVDNLDSI…SATPRIVSKA (152 aa). Residues 1–165 form a required for inhibition of CHRNA3 ubiquitination and translocation of CHRNA3 to the plasma membrane resulting in an increase in acetylcholine-gated nicotinic acetylcholine receptor currents region; that stretch reads MKEVDNLDSI…EVDNKSTLSA (165 aa). Residues 61 to 125 form the SEP domain; sequence QVDVNIKLWK…VEDKKNEVCM (65 aa). The required for interaction with VCP stretch occupies residues 168–258; it reads LNNLEPITRI…QKTAEPFRKL (91 aa). The region spanning 170–247 is the UBX domain; that stretch reads NLEPITRIQI…DLKNAVIIQR (78 aa).

As to quaternary structure, part of a complex composed of STUB1/CHIP, VCP/p97, CHRNA3, and UBXN2A that modulates the ubiquitination and endoplasmic reticulum-associated degradation (ERAD) of CHRNA3. Within the complex UBXN2A acts as a scaffold protein required for the interaction of CHRNA3 with VCP/p97, this interaction also inhibits CHRNA3 ubiquitination by STUB1/CHIP and subsequently ERAD. Interacts (via SEP domain) with CHRNA3 and interacts (via UBX domain) with VCP/P97; these interactions are required for the interaction of CHRNA3 with the STUB1-VCP-UBXN2A complex. Interacts with HSPA9/MOT-2 (via SBD domain); the interaction inhibits HSPA9/MOT-2 interaction with and degradation of p53, thereby promotes p53 translocation to the nucleus. Interacts with RICTOR. Post-translationally, ubiquitinated. In terms of tissue distribution, expressed in the prefrontal cortex (at protein level). Expressed in the habenula and hippocampus (at protein level). Expressed in peripheral ganglia.

The protein localises to the golgi apparatus. It is found in the endoplasmic reticulum. The protein resides in the perikaryon. Its subcellular location is the cell projection. It localises to the dendrite. The protein localises to the nucleus. It is found in the cytoplasm. Acts to repress the ubiquitination and subsequent endoplasmic reticulum-associated degradation of CHRNA3 by the STUB1-VCP-UBXN2A complex in cortical neurons. Also acts to promote the translocation of CHRNA3 to the plasma membrane and subsequently increases plasma membrane acetylcholine-gated ion-channel activation. Plays a role in the inhibition of STUB1-mediated TP53 degradation, via its interaction with HSPA9 which acts to inhibit TP53 binding to HSPA9. Positively mediates the ubiquitination and proteosomal degradation of RICTOR, may thereby act as a negative regulator of the mTORC2 pathway. The sequence is that of UBX domain-containing protein 2A from Mus musculus (Mouse).